The sequence spans 307 residues: Nucleotide-binding protein AAur_2084 (307 aa).

Residues 1-21 (MDEATAKSGTEQDGLTPVKPP) form a disordered region. 30-37 (GMSGAGRS) contacts ATP. 81–84 (DVRS) contacts GTP.

The protein belongs to the RapZ-like family.

In terms of biological role, displays ATPase and GTPase activities. The protein is Nucleotide-binding protein AAur_2084 of Paenarthrobacter aurescens (strain TC1).